The sequence spans 390 residues: Substance-K receptor (390 aa).

The Extracellular segment spans residues 1 to 32; the sequence is MGTRAIVSDANILSGLESNATGVTAFSMPGWQ. A glycan (N-linked (GlcNAc...) asparagine) is linked at Asn-19. Residues 33–56 form a helical membrane-spanning segment; that stretch reads LALWATAYLALVLVAVTGNATVIW. Topologically, residues 57-69 are cytoplasmic; it reads IILAHERMRTVTN. A helical membrane pass occupies residues 70–90; it reads YFIINLALADLCMAAFNATFN. Over 91-107 the chain is Extracellular; sequence FIYASHNIWYFGRAFCY. A disulfide bridge links Cys-106 with Cys-181. Residues 108–129 traverse the membrane as a helical segment; sequence FQNLFPITAMFVSIYSMTAIAA. Residues 130 to 149 are Cytoplasmic-facing; the sequence is DRYMAIVHPFQPRLSAPSTK. Residues 150–170 form a helical membrane-spanning segment; sequence AIIAGIWLVALALASPQCFYS. The Extracellular segment spans residues 171–196; that stretch reads TITVDEGATKCVVAWPNDNGGKMLLL. Residues 197–218 traverse the membrane as a helical segment; it reads YHLVVFVLIYFLPLLVMFGAYS. Residues 219-251 lie on the Cytoplasmic side of the membrane; that stretch reads VIGLTLWKRAVPRHQAHGANLRHLQAKKKFVKA. Residues 252–272 traverse the membrane as a helical segment; the sequence is MVLVVLTFAICWLPYHLYFIL. Residues 273–290 lie on the Extracellular side of the membrane; sequence GTFQEDIYYHKFIQQVYL. A helical membrane pass occupies residues 291 to 310; sequence ALFWLAMSSTMYNPIIYCCL. The Cytoplasmic portion of the chain corresponds to 311–390; the sequence is NHRFRSGFRL…PAGPICKAQA (80 aa). Cys-324 carries S-palmitoyl cysteine lipidation. The disordered stretch occupies residues 365-390; it reads HSEATNGQVGSPQDGEPAGPICKAQA. The span at 366 to 375 shows a compositional bias: polar residues; sequence SEATNGQVGS.

This sequence belongs to the G-protein coupled receptor 1 family.

The protein localises to the cell membrane. In terms of biological role, this is a receptor for the tachykinin neuropeptide substance K (neurokinin A). It is associated with G proteins that activate a phosphatidylinositol-calcium second messenger system. The rank order of affinity of this receptor to tachykinins is: substance K &gt; neuromedin-K &gt; substance P. This is Substance-K receptor (Tacr2) from Rattus norvegicus (Rat).